The chain runs to 194 residues: Mpv17-like protein (194 aa).

The Cytoplasmic segment spans residues 1 to 14 (MASWWRAFPQAARR). A helical membrane pass occupies residues 15 to 34 (YPWPTNVLLYAGLFSAGDAL). The interval 16 to 55 (PWPTNVLLYAGLFSAGDALQQRLRGGPADWRQTRRVATLA) is targeting to peroxisomes. The Lumenal portion of the chain corresponds to 35 to 50 (QQRLRGGPADWRQTRR). Residues 51-67 (VATLAVTFHGNFNYVWL) traverse the membrane as a helical segment. The Cytoplasmic segment spans residues 68-91 (RLLERALPGRAPRTVLAKVLCDQT). Residues 92 to 110 (VGGPIALSAFYVGMSVLQG) form a helical membrane-spanning segment. At 111–150 (KDDIFLDLKQKFWNTYKSGLMYWPFVQLTNFSLVPVHWRT) the chain is on the lumenal side. Residues 151-168 (AYTGLCAFLWATFLCFSQ) traverse the membrane as a helical segment. Residues 169–194 (QSGDGTLQSIFIFLRRKEASDKSPEK) are Cytoplasmic-facing.

This sequence belongs to the peroxisomal membrane protein PXMP2/4 family. In terms of tissue distribution, isoform 1 and isoform 3 are expressed in the kidney (at protein level). Isoform 1 is expressed in the kidney, spleen, heart, brain, lung and liver. Isoform 3 is expressed in the kidney. Isoform 1 and isoform 3 expression increase during development, reache their highest level in adulthood and decrease with aging.

It localises to the peroxisome membrane. It is found in the cytoplasm. Participates in reactive oxygen species metabolism by up- or down-regulation of the genes of antioxidant enzymes. Protective against the mitochondrial apoptotic cascade. Its function is as follows. Participates in reactive oxygen species metabolism by up- or down-regulation of the genes of antioxidant enzymes. The protein is Mpv17-like protein (Mpv17l) of Mus musculus (Mouse).